A 72-amino-acid chain; its full sequence is Keratin-associated protein 19-5 (72 aa).

This sequence belongs to the KRTAP type 19 family. As to quaternary structure, interacts with hair keratins.

Functionally, in the hair cortex, hair keratin intermediate filaments are embedded in an interfilamentous matrix, consisting of hair keratin-associated proteins (KRTAP), which are essential for the formation of a rigid and resistant hair shaft through their extensive disulfide bond cross-linking with abundant cysteine residues of hair keratins. The matrix proteins include the high-sulfur and high-glycine-tyrosine keratins. This chain is Keratin-associated protein 19-5 (KRTAP19-5), found in Homo sapiens (Human).